The chain runs to 430 residues: Elongation factor 1-alpha (430 aa).

The tr-type G domain occupies 7–219; that stretch reads KPHVNIVFIG…DQIPEPEKPV (213 aa). Positions 16–23 are G1; sequence GHVDHGKS. A GTP-binding site is contributed by 16-23; that stretch reads GHVDHGKS. Mg(2+) is bound at residue serine 23. The tract at residues 70–74 is G2; sequence GITID. Positions 91–94 are G3; the sequence is DAPG. GTP contacts are provided by residues 91–95 and 146–149; these read DAPGH and NKMD. The tract at residues 146–149 is G4; it reads NKMD. The tract at residues 183 to 185 is G5; the sequence is SAW.

The protein belongs to the TRAFAC class translation factor GTPase superfamily. Classic translation factor GTPase family. EF-Tu/EF-1A subfamily.

Its subcellular location is the cytoplasm. The catalysed reaction is GTP + H2O = GDP + phosphate + H(+). Functionally, GTP hydrolase that promotes the GTP-dependent binding of aminoacyl-tRNA to the A-site of ribosomes during protein biosynthesis. This is Elongation factor 1-alpha from Pyrococcus woesei.